The sequence spans 896 residues: Translation initiation factor IF-2 (896 aa).

Residues 93-219 show a composition bias toward basic and acidic residues; it reads VKRDPQEAER…RMAEENEKNW (127 aa). Residues 93–307 form a disordered region; it reads VKRDPQEAER…GSALQQGFQK (215 aa). Basic residues predominate over residues 256–271; sequence GRSRSSKAARPAKKGN. Residues 272 to 285 are compositionally biased toward basic and acidic residues; the sequence is KHAESKADREEARA. A tr-type G domain is found at 395 to 564; sequence PRAPVVTIMG…LLQAEVLELK (170 aa). A G1 region spans residues 404-411; that stretch reads GHVDHGKT. 404-411 lines the GTP pocket; it reads GHVDHGKT. The segment at 429–433 is G2; the sequence is GITQH. The tract at residues 450-453 is G3; the sequence is DTPG. Residues 450 to 454 and 504 to 507 contribute to the GTP site; these read DTPGH and NKID. The segment at 504-507 is G4; the sequence is NKID. Positions 540 to 542 are G5; the sequence is SAK.

It belongs to the TRAFAC class translation factor GTPase superfamily. Classic translation factor GTPase family. IF-2 subfamily.

The protein localises to the cytoplasm. Functionally, one of the essential components for the initiation of protein synthesis. Protects formylmethionyl-tRNA from spontaneous hydrolysis and promotes its binding to the 30S ribosomal subunits. Also involved in the hydrolysis of GTP during the formation of the 70S ribosomal complex. The sequence is that of Translation initiation factor IF-2 from Klebsiella pneumoniae subsp. pneumoniae (strain ATCC 700721 / MGH 78578).